A 50-amino-acid chain; its full sequence is Omega-conotoxin Bu8 (50 aa).

Alanine 1 is a signal peptide. Residues 2–24 (EDSRGTQLHRALRKATKLSESTR) constitute a propeptide that is removed on maturation. Intrachain disulfides connect cysteine 25–cysteine 40, cysteine 32–cysteine 44, and cysteine 39–cysteine 49. Cysteine 49 carries the cysteine amide modification.

This sequence belongs to the conotoxin O1 superfamily. In terms of tissue distribution, expressed by the venom duct.

Its subcellular location is the secreted. Its function is as follows. Omega-conotoxins act at presynaptic membranes, they bind and block voltage-gated calcium channels (Cav). This toxin selectively and potently inhibits depolarization-activated rat Cav2.2/CACNA1B currents (IC(50)=89 nM), when coexpressed with alpha-2/delta-1 (CACNA2D1) and beta-3 (CACNB3) subunits. In vivo, is lethal to fish and displays potent analgesic activity in mice pain models of hot plate and acetic acid writhing but has fewer side effects on mouse motor function and lower toxicity in goldfish. Shows higher or similar analgesic activity in the pain models mentioned above compared to MVIIA, and lower side effects. In addition, it blocks Cav2.2/CACNA1B more rapidly than MVIIA and also dissociates more rapidly. This is Omega-conotoxin Bu8 from Conus bullatus (Bubble cone).